Here is a 1240-residue protein sequence, read N- to C-terminus: DNA-directed RNA polymerase subunit beta (1240 aa).

This sequence belongs to the RNA polymerase beta chain family. In terms of assembly, the RNAP catalytic core consists of 2 alpha, 1 beta, 1 beta' and 1 omega subunit. When a sigma factor is associated with the core the holoenzyme is formed, which can initiate transcription.

The catalysed reaction is RNA(n) + a ribonucleoside 5'-triphosphate = RNA(n+1) + diphosphate. Its function is as follows. DNA-dependent RNA polymerase catalyzes the transcription of DNA into RNA using the four ribonucleoside triphosphates as substrates. The protein is DNA-directed RNA polymerase subunit beta of Rhodopirellula baltica (strain DSM 10527 / NCIMB 13988 / SH1).